The sequence spans 443 residues: Toxin YjjJ (443 aa).

Aspartate 342 (proton acceptor) is an active-site residue.

This sequence belongs to the HipA Ser/Thr kinase family.

Functionally, toxic when overexpressed in E.coli, leading to long filamentous cells. The toxic effect is neutralized by non-cognate antitoxin HipB. Does not seem to inhibit DNA, RNA or protein synthesis, and unlike paralogous toxin HipA its toxic activity is not counteracted by overexpression of GltX. Binds DNA. Might be a protein kinase. In Escherichia coli (strain K12), this protein is Toxin YjjJ (yjjJ).